The chain runs to 673 residues: DNA ligase (673 aa).

Residues 34-38, 83-84, and Glu116 contribute to the NAD(+) site; these read DAEYD and SL. Residue Lys118 is the N6-AMP-lysine intermediate of the active site. The NAD(+) site is built by Arg139, Glu176, Lys293, and Lys317. Residues Cys411, Cys414, Cys429, and Cys435 each coordinate Zn(2+). In terms of domain architecture, BRCT spans 595–673; it reads NQQNPFFGKT…EDEFLKWVNS (79 aa).

This sequence belongs to the NAD-dependent DNA ligase family. LigA subfamily. Mg(2+) is required as a cofactor. It depends on Mn(2+) as a cofactor.

It catalyses the reaction NAD(+) + (deoxyribonucleotide)n-3'-hydroxyl + 5'-phospho-(deoxyribonucleotide)m = (deoxyribonucleotide)n+m + AMP + beta-nicotinamide D-nucleotide.. DNA ligase that catalyzes the formation of phosphodiester linkages between 5'-phosphoryl and 3'-hydroxyl groups in double-stranded DNA using NAD as a coenzyme and as the energy source for the reaction. It is essential for DNA replication and repair of damaged DNA. In Legionella pneumophila (strain Paris), this protein is DNA ligase.